The sequence spans 364 residues: S-adenosylmethionine:tRNA ribosyltransferase-isomerase (364 aa).

This sequence belongs to the QueA family. Monomer.

The protein localises to the cytoplasm. The enzyme catalyses 7-aminomethyl-7-carbaguanosine(34) in tRNA + S-adenosyl-L-methionine = epoxyqueuosine(34) in tRNA + adenine + L-methionine + 2 H(+). The protein operates within tRNA modification; tRNA-queuosine biosynthesis. Its function is as follows. Transfers and isomerizes the ribose moiety from AdoMet to the 7-aminomethyl group of 7-deazaguanine (preQ1-tRNA) to give epoxyqueuosine (oQ-tRNA). This chain is S-adenosylmethionine:tRNA ribosyltransferase-isomerase, found in Bradyrhizobium sp. (strain BTAi1 / ATCC BAA-1182).